The following is a 529-amino-acid chain: Interleukin-21 receptor (529 aa).

Positions 1–19 (MPRGPVAALLLLILHGAWS) are cleaved as a signal peptide. Cystine bridges form between cysteine 20–cysteine 109, cysteine 25–cysteine 35, and cysteine 65–cysteine 81. Residues 20 to 237 (CLDLTCYTDY…GEPEAGWDPH (218 aa)) are Extracellular-facing. 2 Fibronectin type-III domains span residues 21-118 (LDLT…AESI) and 119-228 (KPAP…TQAG). N-linked (GlcNAc...) asparagine glycans are attached at residues asparagine 73, asparagine 97, asparagine 104, asparagine 125, and asparagine 182. C-linked (Man) tryptophan glycosylation is present at tryptophan 214. Residues 214 to 218 (WSEWS) carry the WSXWS motif motif. Residues 238–258 (MLLLLAVLIIVLVFMGLKIHL) form a helical membrane-spanning segment. Residues 259 to 529 (PWRLWKKIWA…PPVDSGAQSS (271 aa)) are Cytoplasmic-facing. Positions 266 to 274 (IWAPVPTPE) match the Box 1 motif motif. The disordered stretch occupies residues 458–529 (TADPTWRTGS…PPVDSGAQSS (72 aa)).

It belongs to the type I cytokine receptor family. Type 4 subfamily. As to quaternary structure, heterodimer with the common gamma subunit. Associates with JAK1. In terms of processing, C-mannosylated at Trp-214 in the WSXWS motif, the sugar chain makes extensive hydrogen bonds with Asn-73 sugar, and bridges the two fibronectin domains transforming the V-shaped receptor into an A-frame. As to expression, selectively expressed in lymphoid tissues. Most highly expressed in thymus and spleen.

Its subcellular location is the membrane. Its function is as follows. This is a receptor for interleukin-21. The polypeptide is Interleukin-21 receptor (Il21r) (Mus musculus (Mouse)).